The primary structure comprises 91 residues: UPF0213 protein NMA2126 (91 aa).

Residues 4–83 form the GIY-YIG domain; sequence SNWSLYLILC…AAQKRKLWEQ (80 aa).

The protein belongs to the UPF0213 family.

The polypeptide is UPF0213 protein NMA2126 (Neisseria meningitidis serogroup A / serotype 4A (strain DSM 15465 / Z2491)).